We begin with the raw amino-acid sequence, 587 residues long: Deoxynucleoside triphosphate triphosphohydrolase sahd-1 (587 aa).

Residues 92–262 enclose the HD domain; sequence RFVHSLGTFS…GHDVDKMDYL (171 aa). Zn(2+) is bound by residues His95, His134, Asp135, and Asp257. The segment at 554-587 is disordered; sequence EKFLTPRKRSPQDSPDEVSSSCSTAKRRLEFGSS. Thr558 is modified (phosphothreonine).

It belongs to the SAMHD1 family. Homodimer. Homotetramer; in dGTP-bound form. It depends on Zn(2+) as a cofactor.

The protein resides in the nucleus. It localises to the chromosome. The enzyme catalyses a 2'-deoxyribonucleoside 5'-triphosphate + H2O = a 2'-deoxyribonucleoside + triphosphate + H(+). Allosterically activated and regulated by GTP or dGTP. Allosteric activation promotes the formation of highly active homotetramers. Phosphorylation impairs homotetramerization, thereby inhibiting dNTPase activity. Functionally, has deoxynucleoside triphosphate (dNTPase) activity. dNTPase activity acts as a regulator of DNA precursor pools by regulating dNTP pools. Phosphorylation acts as a switch to control dNTPase-dependent and -independent functions. This chain is Deoxynucleoside triphosphate triphosphohydrolase sahd-1, found in Caenorhabditis elegans.